We begin with the raw amino-acid sequence, 826 residues long: Lethal(3)malignant brain tumor-like protein 1 (826 aa).

Serine 136 is modified (phosphoserine). Disordered stretches follow at residues 167–197 (LEPP…SGDR) and 220–271 (LLKP…RSQL). Over residues 242 to 256 (EAVKQGEGKDAEREP) the composition is skewed to basic and acidic residues. MBT repeat units lie at residues 280–380 (WSWE…LQLP), 388–487 (FSWS…LTPP), and 496–591 (FCWE…LEPP). Residues 453-460 (FDDWGDTY) form an interaction with monomethylated and dimethylated peptides region. A disordered region spans residues 586-621 (HPLEPPLRPRESSSVSPGGCPPLSHRSPPHTKTSKY). A compositionally biased stretch (basic residues) spans 612 to 621 (SPPHTKTSKY). The segment at 619–662 (SKYNFHHRKCPTPGCDGSGHVTGKFTAHHCLSGCPLAEKNQSRL) adopts a CCHHC-type zinc-finger fold. Zn(2+)-binding residues include cysteine 628, cysteine 633, histidine 646, and cysteine 652. Positions 663-699 (KAELSDSETAARKKNPSNLSPRKKPRHQGRIGRPPKY) are disordered. A compositionally biased stretch (basic residues) spans 683–699 (PRKKPRHQGRIGRPPKY). The SAM domain occupies 757–821 (WTIEEVFGFV…YNAILMFKNT (65 aa)).

In terms of assembly, homodimer. Interacts with RB1/RB (when monomethylated at 'Lys-860'). Interacts with p53/TP53 (when monomethylated at 'Lys-382'). Interacts with CBX3, ETV6, KMT5A and VCP/p97. Post-translationally, ubiquitinated in a VCP/p97-dependent way following DNA damage, leading to its removal from DNA damage sites, promoting accessibility of H4K20me2 mark for DNA repair protein TP53BP1, which is then recruited to DNA damage sites. Highly expressed in brain, testis, eyes, and ES cells.

It localises to the nucleus. Its function is as follows. Polycomb group (PcG) protein that specifically recognizes and binds mono- and dimethyllysine residues on target proteins, thereby acting as a 'reader' of a network of post-translational modifications. PcG proteins maintain the transcriptionally repressive state of genes: acts as a chromatin compaction factor by recognizing and binding mono- and dimethylated histone H1b/H1-4 at 'Lys-26' (H1bK26me1 and H1bK26me2) and histone H4 at 'Lys-20' (H4K20me1 and H4K20me2), leading to condense chromatin and repress transcription. Recognizes and binds p53/TP53 monomethylated at 'Lys-382', leading to repress p53/TP53-target genes. Also recognizes and binds RB1/RB monomethylated at 'Lys-860'. Participates in the ETV6-mediated repression. Probably plays a role in cell proliferation. Overexpression induces multinucleated cells, suggesting that it is required to accomplish normal mitosis. The protein is Lethal(3)malignant brain tumor-like protein 1 (L3mbtl1) of Mus musculus (Mouse).